Here is a 360-residue protein sequence, read N- to C-terminus: Peptide chain release factor 1 (360 aa).

Gln-235 is modified (N5-methylglutamine). Residues 285-314 (KRQQAEASTRRNLLGSGDRSDRNRTYNFPQ) form a disordered region.

It belongs to the prokaryotic/mitochondrial release factor family. In terms of processing, methylated by PrmC. Methylation increases the termination efficiency of RF1.

Its subcellular location is the cytoplasm. Its function is as follows. Peptide chain release factor 1 directs the termination of translation in response to the peptide chain termination codons UAG and UAA. In Klebsiella pneumoniae subsp. pneumoniae (strain ATCC 700721 / MGH 78578), this protein is Peptide chain release factor 1.